Here is a 614-residue protein sequence, read N- to C-terminus: Phosphomethylpyrimidine synthase (614 aa).

Over residues 1-16 (MNAQLSALQQQAQQLS) the composition is skewed to low complexity. The interval 1–36 (MNAQLSALQQQAQQLSESVTRPIPGSRKIHVPGSRP) is disordered. Substrate-binding positions include Asn-230, Met-259, Tyr-288, His-324, 344-346 (SRG), 385-388 (DGLR), and Glu-424. Position 428 (His-428) interacts with Zn(2+). Tyr-451 is a substrate binding site. Zn(2+) is bound at residue His-492. [4Fe-4S] cluster-binding residues include Cys-572, Cys-575, and Cys-580.

Belongs to the ThiC family. In terms of assembly, homodimer. The cofactor is [4Fe-4S] cluster.

The catalysed reaction is 5-amino-1-(5-phospho-beta-D-ribosyl)imidazole + S-adenosyl-L-methionine = 4-amino-2-methyl-5-(phosphooxymethyl)pyrimidine + CO + 5'-deoxyadenosine + formate + L-methionine + 3 H(+). It functions in the pathway cofactor biosynthesis; thiamine diphosphate biosynthesis. In terms of biological role, catalyzes the synthesis of the hydroxymethylpyrimidine phosphate (HMP-P) moiety of thiamine from aminoimidazole ribotide (AIR) in a radical S-adenosyl-L-methionine (SAM)-dependent reaction. This is Phosphomethylpyrimidine synthase from Stenotrophomonas maltophilia (strain R551-3).